Reading from the N-terminus, the 185-residue chain is Ribosome-recycling factor (185 aa).

Belongs to the RRF family.

The protein localises to the cytoplasm. Responsible for the release of ribosomes from messenger RNA at the termination of protein biosynthesis. May increase the efficiency of translation by recycling ribosomes from one round of translation to another. This chain is Ribosome-recycling factor, found in Campylobacter lari (strain RM2100 / D67 / ATCC BAA-1060).